A 334-amino-acid chain; its full sequence is Ornithine carbamoyltransferase, catabolic (334 aa).

Residues 57–60 (STRT), Gln84, Arg108, and 135–138 (HPTQ) each bind carbamoyl phosphate. Residues Asn168, Asp232, and 236–237 (SM) contribute to the L-ornithine site. Carbamoyl phosphate contacts are provided by residues 274 to 275 (CL) and Arg320.

This sequence belongs to the aspartate/ornithine carbamoyltransferase superfamily. OTCase family.

It is found in the cytoplasm. The enzyme catalyses carbamoyl phosphate + L-ornithine = L-citrulline + phosphate + H(+). It functions in the pathway amino-acid degradation; L-arginine degradation via ADI pathway; carbamoyl phosphate from L-arginine: step 2/2. Functionally, reversibly catalyzes the transfer of the carbamoyl group from carbamoyl phosphate (CP) to the N(epsilon) atom of ornithine (ORN) to produce L-citrulline. This is Ornithine carbamoyltransferase, catabolic (arcB) from Rhizobium meliloti (strain 1021) (Ensifer meliloti).